Consider the following 431-residue polypeptide: Divergent protein kinase domain 1B (431 aa).

Residues 1-30 (MRRLRRLAHLVLFCPFSKRLQGRLPGLRVR) lie on the Cytoplasmic side of the membrane. Residues 5-6 (RR) carry the May mediate ER retention motif. The chain crosses the membrane as a helical span at residues 31–51 (CIFLAWLGVFAGSWLVYVHYS). At 52-431 (SYSERCRGHV…WKKISNTKYS (380 aa)) the chain is on the lumenal side. 2 disulfides stabilise this stretch: C57–C94 and C62–C117.

It belongs to the DIPK family. Among the many cysteines in the lumenal domain, most are probably involved in disulfide bonds.

Its subcellular location is the endoplasmic reticulum membrane. In Homo sapiens (Human), this protein is Divergent protein kinase domain 1B.